The following is a 273-amino-acid chain: NH(3)-dependent NAD(+) synthetase (273 aa).

An ATP-binding site is contributed by 46 to 53 (GISGGQDS). Asp-52 is a binding site for Mg(2+). Arg-139 is a binding site for deamido-NAD(+). ATP is bound at residue Thr-159. Glu-164 serves as a coordination point for Mg(2+). Residues Lys-172 and Asp-179 each contribute to the deamido-NAD(+) site. ATP is bound by residues Lys-188 and Thr-210. A deamido-NAD(+)-binding site is contributed by 259-260 (HK).

It belongs to the NAD synthetase family. In terms of assembly, homodimer.

It catalyses the reaction deamido-NAD(+) + NH4(+) + ATP = AMP + diphosphate + NAD(+) + H(+). Its pathway is cofactor biosynthesis; NAD(+) biosynthesis; NAD(+) from deamido-NAD(+) (ammonia route): step 1/1. Catalyzes the ATP-dependent amidation of deamido-NAD to form NAD. Uses ammonia as a nitrogen source. The polypeptide is NH(3)-dependent NAD(+) synthetase (Streptococcus thermophilus (strain ATCC BAA-250 / LMG 18311)).